A 231-amino-acid polypeptide reads, in one-letter code: ATP phosphoribosyltransferase (231 aa).

This sequence belongs to the ATP phosphoribosyltransferase family. Short subfamily. As to quaternary structure, heteromultimer composed of HisG and HisZ subunits.

It localises to the cytoplasm. It catalyses the reaction 1-(5-phospho-beta-D-ribosyl)-ATP + diphosphate = 5-phospho-alpha-D-ribose 1-diphosphate + ATP. It functions in the pathway amino-acid biosynthesis; L-histidine biosynthesis; L-histidine from 5-phospho-alpha-D-ribose 1-diphosphate: step 1/9. Functionally, catalyzes the condensation of ATP and 5-phosphoribose 1-diphosphate to form N'-(5'-phosphoribosyl)-ATP (PR-ATP). Has a crucial role in the pathway because the rate of histidine biosynthesis seems to be controlled primarily by regulation of HisG enzymatic activity. This chain is ATP phosphoribosyltransferase, found in Brucella ovis (strain ATCC 25840 / 63/290 / NCTC 10512).